A 385-amino-acid polypeptide reads, in one-letter code: Probable tRNA sulfurtransferase (385 aa).

One can recognise a THUMP domain in the interval 57–160 (DGVIERVKKV…RGNAYVFTDK (104 aa)). Residues 180-181 (ML), 205-206 (YY), Arg-262, Gly-284, and Gln-293 contribute to the ATP site.

It belongs to the ThiI family.

The protein resides in the cytoplasm. The catalysed reaction is [ThiI sulfur-carrier protein]-S-sulfanyl-L-cysteine + a uridine in tRNA + 2 reduced [2Fe-2S]-[ferredoxin] + ATP + H(+) = [ThiI sulfur-carrier protein]-L-cysteine + a 4-thiouridine in tRNA + 2 oxidized [2Fe-2S]-[ferredoxin] + AMP + diphosphate. It catalyses the reaction [ThiS sulfur-carrier protein]-C-terminal Gly-Gly-AMP + S-sulfanyl-L-cysteinyl-[cysteine desulfurase] + AH2 = [ThiS sulfur-carrier protein]-C-terminal-Gly-aminoethanethioate + L-cysteinyl-[cysteine desulfurase] + A + AMP + 2 H(+). It participates in cofactor biosynthesis; thiamine diphosphate biosynthesis. Catalyzes the ATP-dependent transfer of a sulfur to tRNA to produce 4-thiouridine in position 8 of tRNAs, which functions as a near-UV photosensor. Also catalyzes the transfer of sulfur to the sulfur carrier protein ThiS, forming ThiS-thiocarboxylate. This is a step in the synthesis of thiazole, in the thiamine biosynthesis pathway. The sulfur is donated as persulfide by IscS. In Clostridium perfringens (strain 13 / Type A), this protein is Probable tRNA sulfurtransferase.